The primary structure comprises 361 residues: Peptide chain release factor 1 (361 aa).

The residue at position 238 (Gln238) is an N5-methylglutamine.

The protein belongs to the prokaryotic/mitochondrial release factor family. Post-translationally, methylated by PrmC. Methylation increases the termination efficiency of RF1.

Its subcellular location is the cytoplasm. Its function is as follows. Peptide chain release factor 1 directs the termination of translation in response to the peptide chain termination codons UAG and UAA. The polypeptide is Peptide chain release factor 1 (Mesomycoplasma hyopneumoniae (strain 7448) (Mycoplasma hyopneumoniae)).